A 935-amino-acid chain; its full sequence is Transmembrane channel-like protein 1 (935 aa).

2 disordered regions span residues 1–21 (MPRH…DEGK) and 37–204 (ERGK…LGSL). 5 stretches are compositionally biased toward basic and acidic residues: residues 37–47 (ERGKIKQASRD), 54–79 (RNGE…EKKH), 109–136 (DKSS…EKDV), 152–163 (NHEKTKQHLKEE), and 172–184 (PETT…KSES). The next 10 membrane-spanning stretches (helical) occupy residues 303-340 (SSVA…MGKP), 392-423 (RMPL…ANEE), 480-510 (LTRF…VRRS), 523-550 (WWER…ISTL), 555-589 (PRIA…QLKR), 633-670 (WETM…VRFL), 690-710 (VSGN…GAFY), 714-736 (LPAL…VMCC), 751-774 (NFYM…TIVS), and 818-851 (LVLP…KKKL). The segment covering 874-886 (EQARKAGEQRRNS) has biased composition (basic and acidic residues). Residues 874-935 (EQARKAGEQR…QQPQKNSKKR (62 aa)) form a disordered region. 2 stretches are compositionally biased toward polar residues: residues 899–919 (SHVS…TSSG) and 926–935 (QQPQKNSKKR).

The protein belongs to the TMC family. In terms of assembly, interacts specifically with isoform CD3 of PCDH15A (via cytoplasmic domain). In adults, expression is restricted to the hair cells of inner ear and lateral line organ. Expressed at higher levels in the larval lateral-line neuromasts than in the larval inner ear. Expressed in the sensory hair cell patches of the ear at 4 days post fertilization (dpf).

Its subcellular location is the cell membrane. It carries out the reaction Ca(2+)(in) = Ca(2+)(out). Pore-forming subunit of the mechanotransducer (MET) non-selective cation channel complex located at the tips of hair-cell stereocilia. Highly permeable to calcium and likely transports monovalent cations. The polypeptide is Transmembrane channel-like protein 1 (Danio rerio (Zebrafish)).